The primary structure comprises 469 residues: GTPase Der (469 aa).

EngA-type G domains are found at residues 3–167 (PTVA…PDEV) and 175–348 (PKFA…RAAM). Residues 9-16 (GRPNVGKS), 56-60 (DTGGF), 119-122 (NKAE), 181-188 (GRPNVGKS), 228-232 (DTAGV), and 293-296 (NKWD) contribute to the GTP site. The 85-residue stretch at 349-433 (SKLATPKLTR…PLRVQYKSSE (85 aa)) folds into the KH-like domain. Positions 429-469 (YKSSENPFDNDEKDKPRAKPKPMSKMRGREKEVRYGKNSKK) are disordered.

Belongs to the TRAFAC class TrmE-Era-EngA-EngB-Septin-like GTPase superfamily. EngA (Der) GTPase family. As to quaternary structure, associates with the 50S ribosomal subunit.

Its function is as follows. GTPase that plays an essential role in the late steps of ribosome biogenesis. The polypeptide is GTPase Der (Chromobacterium violaceum (strain ATCC 12472 / DSM 30191 / JCM 1249 / CCUG 213 / NBRC 12614 / NCIMB 9131 / NCTC 9757 / MK)).